The following is a 249-amino-acid chain: 1-(5-phosphoribosyl)-5-[(5-phosphoribosylamino)methylideneamino] imidazole-4-carboxamide isomerase (249 aa).

Aspartate 11 serves as the catalytic Proton acceptor. Residue aspartate 133 is the Proton donor of the active site.

It belongs to the HisA/HisF family.

Its subcellular location is the cytoplasm. It carries out the reaction 1-(5-phospho-beta-D-ribosyl)-5-[(5-phospho-beta-D-ribosylamino)methylideneamino]imidazole-4-carboxamide = 5-[(5-phospho-1-deoxy-D-ribulos-1-ylimino)methylamino]-1-(5-phospho-beta-D-ribosyl)imidazole-4-carboxamide. It functions in the pathway amino-acid biosynthesis; L-histidine biosynthesis; L-histidine from 5-phospho-alpha-D-ribose 1-diphosphate: step 4/9. The protein is 1-(5-phosphoribosyl)-5-[(5-phosphoribosylamino)methylideneamino] imidazole-4-carboxamide isomerase of Mannheimia succiniciproducens (strain KCTC 0769BP / MBEL55E).